A 320-amino-acid chain; its full sequence is ATP-dependent 6-phosphofructokinase (320 aa).

Residues Gly-11, 72-73, and 102-105 contribute to the ATP site; these read RY and GDGS. Position 103 (Asp-103) interacts with Mg(2+). Residues 125–127, Arg-162, 169–171, Glu-222, Arg-243, and 249–252 each bind substrate; these read TID, MGR, and HMQR. Asp-127 serves as the catalytic Proton acceptor.

This sequence belongs to the phosphofructokinase type A (PFKA) family. ATP-dependent PFK group I subfamily. Prokaryotic clade 'B1' sub-subfamily. As to quaternary structure, homotetramer. Mg(2+) serves as cofactor.

It is found in the cytoplasm. It catalyses the reaction beta-D-fructose 6-phosphate + ATP = beta-D-fructose 1,6-bisphosphate + ADP + H(+). It functions in the pathway carbohydrate degradation; glycolysis; D-glyceraldehyde 3-phosphate and glycerone phosphate from D-glucose: step 3/4. Its activity is regulated as follows. Allosterically activated by ADP and other diphosphonucleosides, and allosterically inhibited by phosphoenolpyruvate. Its function is as follows. Catalyzes the phosphorylation of D-fructose 6-phosphate to fructose 1,6-bisphosphate by ATP, the first committing step of glycolysis. The chain is ATP-dependent 6-phosphofructokinase from Lactiplantibacillus plantarum (strain ATCC BAA-793 / NCIMB 8826 / WCFS1) (Lactobacillus plantarum).